The chain runs to 128 residues: Lymphocyte antigen 6 complex locus protein G5c (128 aa).

An N-terminal signal peptide occupies residues 1–29 (MGAEYGCLPSTSQALYVILLIVLVRMSLV). The 92-residue stretch at 37 to 128 (LRCYRCLLET…NPQNRVFYIP (92 aa)) folds into the UPAR/Ly6 domain. 5 cysteine pairs are disulfide-bonded: C39–C66, C42–C51, C58–C85, C94–C111, and C112–C117. The N-linked (GlcNAc...) asparagine glycan is linked to N73.

Forms oligomers. In terms of processing, N-glycosylated. In terms of tissue distribution, abundantly expressed in the epididymis.

It is found in the secreted. Its function is as follows. May have a role in hematopoietic cell differentiation. This chain is Lymphocyte antigen 6 complex locus protein G5c (LY6G5C), found in Canis lupus familiaris (Dog).